A 1018-amino-acid polypeptide reads, in one-letter code: UPF0182 protein Francci3_3781 (1018 aa).

7 helical membrane-spanning segments follow: residues 13–33 (TKVL…IAIF), 60–80 (ILLF…NIVL), 109–129 (MLLI…LSAA), 167–187 (FLLG…LLTH), 208–228 (AHIS…YYLD), 250–270 (AVLP…VLFI), and 283–303 (LGAG…PAIV). 2 stretches are compositionally biased toward low complexity: residues 886–896 (TTDAGQDGTPA) and 960–980 (SSPA…SVPA). Disordered stretches follow at residues 886-920 (TTDA…AVGD) and 960-1018 (SSPA…PAPG). Positions 981–995 (SPVPASPAAKPPAPS) are enriched in pro residues.

Belongs to the UPF0182 family.

Its subcellular location is the cell membrane. This is UPF0182 protein Francci3_3781 from Frankia casuarinae (strain DSM 45818 / CECT 9043 / HFP020203 / CcI3).